Consider the following 905-residue polypeptide: Stonin-2 (905 aa).

Disordered stretches follow at residues 1-121 (MTTL…HQET), 178-205 (EQTSGQASGADSTDNSSSLQEDEEVEME), and 244-263 (LPPVTSPLKPNTPPSASVIP). Residues 40–50 (SSSPDQSESSS) are compositionally biased toward low complexity. Residues 60-73 (SQDHSHSEQDDSSE) are compositionally biased toward basic and acidic residues. The segment covering 85 to 94 (PGSPEQPPPD) has biased composition (pro residues). Over residues 178-196 (EQTSGQASGADSTDNSSSL) the composition is skewed to polar residues. Residues 244-256 (LPPVTSPLKPNTP) show a composition bias toward pro residues. Thr255 is modified (phosphothreonine). 3 positions are modified to phosphoserine: Ser281, Ser287, and Ser302. Short sequence motifs (NPF) lie at residues 313 to 315 (NPF) and 329 to 331 (NPF). An SHD domain is found at 427–560 (GWPMMLRIPE…DLPVLSMDLS (134 aa)). One can recognise an MHD domain in the interval 568-878 (EEEITVDVRD…SYQVALGSIW (311 aa)). The residue at position 762 (Ser762) is a Phosphoserine.

It belongs to the Stoned B family. As to quaternary structure, interacts with the second C2 domain of synaptotagmins SYT1 and SYT2. Interacts with EPS15, EPS15R and ITSN1. Interacts indirectly with the AP-2 adapter complex. Interacts with TOR1A and COPS4; the interaction controls STON2 protein stability. In terms of processing, phosphorylated in vitro by PKD. Post-translationally, neddylated; deneddylated via its interaction with the COP9 signalosome (CSN) complex through TOR1A and COPS4. Ubiquitinated; leading to its degradation. As to expression, ubiquitous.

It localises to the cytoplasm. Its subcellular location is the membrane. It is found in the synapse. The protein resides in the synaptosome. Functionally, adapter protein involved in endocytic machinery. Involved in the synaptic vesicle recycling. May facilitate clathrin-coated vesicle uncoating. In Homo sapiens (Human), this protein is Stonin-2 (STON2).